A 505-amino-acid polypeptide reads, in one-letter code: Glycerol kinase (505 aa).

Threonine 12 is a binding site for ADP. The ATP site is built by threonine 12, threonine 13, and serine 14. Residue threonine 12 participates in sn-glycerol 3-phosphate binding. Arginine 16 contacts ADP. Sn-glycerol 3-phosphate contacts are provided by arginine 82, glutamate 83, tyrosine 134, and aspartate 249. Arginine 82, glutamate 83, tyrosine 134, aspartate 249, and glutamine 250 together coordinate glycerol. ADP is bound by residues threonine 271 and glycine 315. Residues threonine 271, glycine 315, glutamine 319, and glycine 416 each contribute to the ATP site. ADP-binding residues include glycine 416 and asparagine 420.

This sequence belongs to the FGGY kinase family.

The catalysed reaction is glycerol + ATP = sn-glycerol 3-phosphate + ADP + H(+). The protein operates within polyol metabolism; glycerol degradation via glycerol kinase pathway; sn-glycerol 3-phosphate from glycerol: step 1/1. Inhibited by fructose 1,6-bisphosphate (FBP). Its function is as follows. Key enzyme in the regulation of glycerol uptake and metabolism. Catalyzes the phosphorylation of glycerol to yield sn-glycerol 3-phosphate. In Mycolicibacterium gilvum (strain PYR-GCK) (Mycobacterium gilvum (strain PYR-GCK)), this protein is Glycerol kinase.